We begin with the raw amino-acid sequence, 325 residues long: ATP phosphoribosyltransferase (325 aa).

Belongs to the ATP phosphoribosyltransferase family. Long subfamily. Mg(2+) is required as a cofactor.

It is found in the cytoplasm. It carries out the reaction 1-(5-phospho-beta-D-ribosyl)-ATP + diphosphate = 5-phospho-alpha-D-ribose 1-diphosphate + ATP. It functions in the pathway amino-acid biosynthesis; L-histidine biosynthesis; L-histidine from 5-phospho-alpha-D-ribose 1-diphosphate: step 1/9. Its activity is regulated as follows. Feedback inhibited by histidine. In terms of biological role, catalyzes the condensation of ATP and 5-phosphoribose 1-diphosphate to form N'-(5'-phosphoribosyl)-ATP (PR-ATP). Has a crucial role in the pathway because the rate of histidine biosynthesis seems to be controlled primarily by regulation of HisG enzymatic activity. This is ATP phosphoribosyltransferase from Nitrobacter hamburgensis (strain DSM 10229 / NCIMB 13809 / X14).